The primary structure comprises 281 residues: Digeranylgeranylglyceryl phosphate synthase (281 aa).

7 consecutive transmembrane segments (helical) span residues 14 to 34 (AMAA…LSSA), 38 to 58 (VSLS…VTGA), 95 to 115 (LFLF…CGII), 149 to 169 (FLFG…VLFL), 207 to 227 (ASYI…VPYL), 235 to 255 (YLFV…QILG), and 259 to 279 (AARS…SFIV).

The protein belongs to the UbiA prenyltransferase family. DGGGP synthase subfamily. Requires Mg(2+) as cofactor.

Its subcellular location is the cell membrane. The catalysed reaction is sn-3-O-(geranylgeranyl)glycerol 1-phosphate + (2E,6E,10E)-geranylgeranyl diphosphate = 2,3-bis-O-(geranylgeranyl)-sn-glycerol 1-phosphate + diphosphate. The protein operates within membrane lipid metabolism; glycerophospholipid metabolism. In terms of biological role, prenyltransferase that catalyzes the transfer of the geranylgeranyl moiety of geranylgeranyl diphosphate (GGPP) to the C2 hydroxyl of (S)-3-O-geranylgeranylglyceryl phosphate (GGGP). This reaction is the second ether-bond-formation step in the biosynthesis of archaeal membrane lipids. This is Digeranylgeranylglyceryl phosphate synthase from Methanococcoides burtonii (strain DSM 6242 / NBRC 107633 / OCM 468 / ACE-M).